Reading from the N-terminus, the 213-residue chain is FMN-dependent NADH:quinone oxidoreductase 3 (213 aa).

FMN contacts are provided by residues serine 10, 16-18 (SVS), and 96-99 (MYNF).

The protein belongs to the azoreductase type 1 family. As to quaternary structure, homodimer. FMN is required as a cofactor.

The enzyme catalyses 2 a quinone + NADH + H(+) = 2 a 1,4-benzosemiquinone + NAD(+). It carries out the reaction N,N-dimethyl-1,4-phenylenediamine + anthranilate + 2 NAD(+) = 2-(4-dimethylaminophenyl)diazenylbenzoate + 2 NADH + 2 H(+). Functionally, quinone reductase that provides resistance to thiol-specific stress caused by electrophilic quinones. Shows a preference for naphthoquinones such as plumbagin. Also exhibits azoreductase activity. Catalyzes the reductive cleavage of the azo bond in aromatic azo compounds to the corresponding amines. Preferred substrates are methyl red, amaranth and p-aminoazobenzene sulfonamide (PAABSA). This Pseudomonas aeruginosa (strain ATCC 15692 / DSM 22644 / CIP 104116 / JCM 14847 / LMG 12228 / 1C / PRS 101 / PAO1) protein is FMN-dependent NADH:quinone oxidoreductase 3.